We begin with the raw amino-acid sequence, 3476 residues long: Abnormal spindle-like microcephaly-associated protein homolog (3476 aa).

The segment at 1–34 is disordered; it reads MANRRVGRGCWEVSPTERRPPAGLRGPATEEEAS. Residues Ser-280, Ser-283, Ser-367, Ser-392, Ser-425, and Ser-605 each carry the phosphoserine modification. The 137-residue stretch at 920–1056 folds into the Calponin-homology (CH) 1 domain; that stretch reads KASKEILLAF…LLWKIAFAFQ (137 aa). Residues 1057-1078 adopt a coiled-coil conformation; the sequence is VDISLNLDQLKEEIAFLKHTKS. A Phosphoserine modification is found at Ser-1103. Positions 1110–1261 constitute a Calponin-homology (CH) 2 domain; sequence SENIKLLMDW…YLSFLCARLL (152 aa). IQ domains lie at 1347–1378, 1393–1422, 1582–1613, 1605–1634, 1632–1661, 1655–1684, 1728–1757, 1751–1782, 1801–1830, 1824–1853, 1874–1903, 1897–1928, 1947–1978, 1970–2001, 2020–2049, 2043–2074, 2093–2124, 2116–2147, 2239–2270, 2262–2293, 2311–2342, 2334–2365, 2384–2415, 2407–2438, 2457–2488, 2530–2561, 2624–2653, 2665–2696, 2688–2719, 2738–2767, 2814–2845, 2859–2890, 2909–2938, 2932–2963, 2954–2985, 3029–3060, 3079–3110, and 3203–3234; these read QNKAASLIQGYWRRYSTRKRFLKLKYYSIILQ, YLWATVTIQRHWRAYLRRKQDQQRYEMLKS, LKKTIIKLQAHIRKHQQVQKYKKMKKAAVIIQ, MKKAAVIIQTHFRAYIFTRKVLASYQKTRS, TRSAVIVLQSAYRGMQARKVYIHILTSVIK, ILTSVIKIQSYYRAYVSKKEFLSLKNTTIK, MRESCIKLQAFVRGYLVRKQMRLQRKAVIS, QRKAVISLQSYFRMRKARQYYLKMCKAIIVIQ, VKKAATCLQAAYRGYKVRQLIKQQSIAALK, QSIAALKIQSAFRGYNKRVKYQSVLQSIIK, TKAAVVSLQSAYRGWKVRKQIRREHQAALK, EHQAALKIQSAFRMAKAQKQFRLFKTAALVIQ, LRHAVLILQSMWKGKTLRRQLQRQXKCAIIIQ, QXKCAIIIQSYYRMHVQQKKWKIMKKAALLIQ, TKAAVVTLQSAYRGMKVRKRIKDCNKAAVT, CNKAAVTIQSKYRAYKTKKKYATYRASAIIIQ, LKKTAIKIQSVYRGIRVRRHIQHMHRAATFIK, MHRAATFIKAMFKMHQSRISYHTMRKAAIVIQ, LRHSVIYIQAIFRGKKARRHLKMMHVAATLIQ, MHVAATLIQRRFRTLMMRRRFLSLKKTAVWIQ, VQNAVIKIQSSYRRWMIRKKMREMHRAATFIQ, MHRAATFIQATFRMHRVHMRYQALKQASVVIQ, QRRSAVILQAAFRGVKTRRHLKSMHSSATLIQ, MHSSATLIQSRFRSLLVRRRFISLKKATIFVQ, LRKAAITIQSSYRRLMVKKKLQEMQRAAVLIQ, QWHSAVVIQTAYKGMKARQHLREKHKAAIIIQ, QHQAAIIIQKHCKAFKIRKHYLHLRATVVS, RTQAVICIQSYYRGFKVRRDIQNMHRAATLIQ, MHRAATLIQSFYRMHRAKVDYQTKKTAIVVIQ, VQKSVRTIQAAFRGMKVRQKLKIVSEEKMA, QSRAAVTIQNAFRRMVTRKLETQKCAALRIQF, QKRAAITLQHYFRTWQTRKQFLLYRKAAVVLQ, IRSSVIIIQARSKGFIQKRKFQEIKNSTIK, IKNSTIKIQAMWRRYRAKKYLCKVKAACKIQA, KVKAACKIQAWYRCWRAHKEYLAILKAVKIIQ, RHRAACLIQAHYRGYKERQVFLRQKSAALIIQ, FKKSTVILQALVRGWLVRKRILEQKTKIRLLH, and FTSGIIKIQALWRGYSWRKKNDCTKIKAIRLS.

The protein localises to the cytoplasm. It is found in the cytoskeleton. It localises to the spindle. Its subcellular location is the nucleus. Probable role in mitotic spindle regulation and coordination of mitotic processes. May have a preferential role in regulating neurogenesis. In Macaca fascicularis (Crab-eating macaque), this protein is Abnormal spindle-like microcephaly-associated protein homolog (ASPM).